The following is a 157-amino-acid chain: RxLR effector protein PITG_04049 (157 aa).

A signal peptide spans M1–S23. A RxLR-dEER motif is present at residues Q51–R65.

The protein belongs to the RxLR effector family.

The protein resides in the secreted. Its subcellular location is the host cytoplasm. It localises to the host nucleus. Its function is as follows. Effector that might be involved in host plant infection. The chain is RxLR effector protein PITG_04049 from Phytophthora infestans (strain T30-4) (Potato late blight agent).